The chain runs to 1501 residues: Protein SNQ2 (1501 aa).

Positions 1–17 (MSNIKSTQDSSHNAVAR) are enriched in polar residues. The tract at residues 1-56 (MSNIKSTQDSSHNAVARSSSASFAASEESFTGITHDKDEQSDTPADKLTKMLTGPA) is disordered. The residue at position 2 (serine 2) is an N-acetylserine. The segment covering 18–30 (SSSASFAASEESF) has biased composition (low complexity). Phosphoserine is present on residues serine 26 and serine 29. The span at 34–49 (THDKDEQSDTPADKLT) shows a compositional bias: basic and acidic residues. A phosphoserine mark is found at serine 64, serine 80, and serine 86. Positions 161–410 (FKGIKAKRHQ…FAKMGYLCPP (250 aa)) constitute an ABC transporter 1 domain. N-linked (GlcNAc...) asparagine glycosylation is found at asparagine 273, asparagine 334, and asparagine 518. 5 helical membrane passes run 521–541 (YTVINVCSAIIQSFITGSLFY), 554–574 (GGVLYFALLYYSLMGLANISF), 600–620 (LASFPFRMIGLTCFFIILFFL), 628–648 (GSFFTIYLFLTMCSEAINGLF), and 664–680 (ISGILMMSISMYSTYMI). Residue asparagine 730 is glycosylated (N-linked (GlcNAc...) asparagine). A helical membrane pass occupies residues 771 to 789 (FGILWCFLLGYVVLKVIFT). Residues 853–1095 (FIWKDVCFTI…ILNYFERNGA (243 aa)) form the ABC transporter 2 domain. The N-linked (GlcNAc...) asparagine glycan is linked to asparagine 874. 889–896 (GESGAGKT) serves as a coordination point for ATP. The residue at position 1153 (threonine 1153) is a Phosphothreonine. Helical transmembrane passes span 1190-1212 (IMSKMMLMLVGGLYIGFTFFNVG), 1216-1236 (VGLQNAMFAAFISIILSAPAM), 1277-1296 (HLFFSTIFFVSSYFPLRIFF), and 1333-1352 (ANVILGLCLSFMLSFCGVTQ). The N-linked (GlcNAc...) asparagine glycan is linked to asparagine 1401. A helical transmembrane segment spans residues 1455–1475 (FGIFWIYIFFNIIAMVCVYYL).

This sequence belongs to the ABC transporter superfamily. ABCG family. PDR (TC 3.A.1.205) subfamily.

The protein resides in the membrane. In terms of biological role, could be an ATP-dependent permease. Confers hyper-resistance to the mutagens 4-nitroquinoline-N-oxide (4-NQO) and triaziquone, as well as to the chemicals sulphomethuron methyl phenanthroline when present in multiple copies. Exhibits nucleoside triphosphatase activity. The protein is Protein SNQ2 (SNQ2) of Saccharomyces cerevisiae (strain ATCC 204508 / S288c) (Baker's yeast).